Consider the following 574-residue polypeptide: E3 ubiquitin-protein ligase TRIM23 (574 aa).

The RING-type; degenerate zinc finger occupies 31–76 (CGVCEDVFSLQGDKVPRLLLCGHTVCHDCLTRLPLHGRAIRCPFDR). The B box-type; degenerate zinc finger occupies 122–168 (ESIIRCDEDEAHLASVYCTVCATHLCSECSQVTHSTKTLAKHRRVPL). A coiled-coil region spans residues 352–379 (RVVLAKQEITRLLETLQKQQQQFTEVAD). The interval 390–574 (TFTKDNRVHI…LVAAGVLDVA (185 aa)) is ARF-like. Residues 411 to 418 (GLDGAGKT), 454 to 458 (DVGGK), and 513 to 516 (NKQD) contribute to the GTP site.

This sequence in the C-terminal section; belongs to the small GTPase superfamily. Arf family. In terms of assembly, homodimer. Interacts with PSCD1. Interacts with UBE2D2. Interacts with TBK1 (via N-terminal kinase domain) and p62/SQSTM1. As to quaternary structure, (Microbial infection) Interacts with human cytomegalovirus protein UL144; this interaction might cause autoubiquitination of TRAF6, leading to NF-kappa-B activation.

It localises to the cytoplasm. Its subcellular location is the endomembrane system. It is found in the golgi apparatus membrane. The protein resides in the lysosome membrane. It carries out the reaction S-ubiquitinyl-[E2 ubiquitin-conjugating enzyme]-L-cysteine + [acceptor protein]-L-lysine = [E2 ubiquitin-conjugating enzyme]-L-cysteine + N(6)-ubiquitinyl-[acceptor protein]-L-lysine.. It functions in the pathway protein modification; protein ubiquitination. Acts as an E3 ubiquitin-protein ligase. Plays an essential role in autophagy activation during viral infection. Mechanistically, activates TANK-binding kinase 1/TBK1 by facilitating its dimerization and ability to phosphorylate the selective autophagy receptor SQSTM1. In order to achieve this function, TRIM23 mediates 'Lys-27'-linked auto-ubiquitination of its ADP-ribosylation factor (ARF) domain to induce its GTPase activity and its recruitment to autophagosomes. Functionally, (Microbial infection) Mediates TRAF6 auto-ubiquitination in the presence of human cytomegalovirus protein UL144, resulting in the virally controlled activation of NF-kappa-B stimulation at early times of HCMV infection. The sequence is that of E3 ubiquitin-protein ligase TRIM23 (TRIM23) from Homo sapiens (Human).